We begin with the raw amino-acid sequence, 639 residues long: Phosphatidylinositol 3,4,5-trisphosphate 3-phosphatase cnrN (639 aa).

In terms of domain architecture, Phosphatase tensin-type spans 20–190 (FKSKEMDLDL…NYFKEIVSGS (171 aa)). Cysteine 129 functions as the Phosphocysteine intermediate in the catalytic mechanism. The 156-residue stretch at 195–350 (EFVLTFRSIE…LQMECRFQNN (156 aa)) folds into the C2 tensin-type domain. Disordered regions lie at residues 243-265 (INND…NNNN), 395-429 (NNIL…HSTP), 451-498 (SSSG…SCSS), 519-567 (NNNN…RKRK), and 598-628 (FTKK…DPSE). 4 stretches are compositionally biased toward low complexity: residues 244 to 265 (NNDN…NNNN), 395 to 424 (NNIL…LPSS), 458 to 486 (NSSR…SRSS), and 519 to 554 (NNNN…SNSN). The segment covering 598 to 608 (FTKKINPNNNE) has biased composition (polar residues). Positions 619–628 (LKKETNDPSE) are enriched in basic and acidic residues.

Mg(2+) serves as cofactor.

It catalyses the reaction a 1,2-diacyl-sn-glycero-3-phospho-(1D-myo-inositol-3,4,5-trisphosphate) + H2O = a 1,2-diacyl-sn-glycero-3-phospho-(1D-myo-inositol-4,5-bisphosphate) + phosphate. Functionally, protein phosphatase that negatively regulates PI3K-dependent pathways. Regulates cAMP signal transduction to control territory size. During development, a lawn of Dictyostelium cells breaks up into territories where cells aggregate in dendritic streams to form groups of 20'000 cells. This chain is Phosphatidylinositol 3,4,5-trisphosphate 3-phosphatase cnrN (cnrN), found in Dictyostelium discoideum (Social amoeba).